Reading from the N-terminus, the 731-residue chain is Catalase-peroxidase (731 aa).

A disordered region spans residues Met1–Asn23. Residues Trp95–Tyr218 constitute a cross-link (tryptophyl-tyrosyl-methioninium (Trp-Tyr) (with M-244)). His96 serves as the catalytic Proton acceptor. Residues Tyr218–Met244 constitute a cross-link (tryptophyl-tyrosyl-methioninium (Tyr-Met) (with W-95)). Heme b is bound at residue His259.

Belongs to the peroxidase family. Peroxidase/catalase subfamily. Homodimer or homotetramer. It depends on heme b as a cofactor. Formation of the three residue Trp-Tyr-Met cross-link is important for the catalase, but not the peroxidase activity of the enzyme.

It catalyses the reaction H2O2 + AH2 = A + 2 H2O. It carries out the reaction 2 H2O2 = O2 + 2 H2O. Its function is as follows. Bifunctional enzyme with both catalase and broad-spectrum peroxidase activity. This chain is Catalase-peroxidase, found in Synechococcus sp. (strain WH7803).